Here is a 392-residue protein sequence, read N- to C-terminus: 8-amino-7-oxononanoate synthase (392 aa).

Substrate is bound at residue Arg-19. 106 to 107 (GY) provides a ligand contact to pyridoxal 5'-phosphate. Residue His-131 participates in substrate binding. Ser-176, His-204, and Thr-233 together coordinate pyridoxal 5'-phosphate. Lys-236 is subject to N6-(pyridoxal phosphate)lysine. Thr-350 contacts substrate.

Belongs to the class-II pyridoxal-phosphate-dependent aminotransferase family. BioF subfamily. In terms of assembly, homodimer. The cofactor is pyridoxal 5'-phosphate.

It catalyses the reaction 6-carboxyhexanoyl-[ACP] + L-alanine + H(+) = (8S)-8-amino-7-oxononanoate + holo-[ACP] + CO2. The protein operates within cofactor biosynthesis; biotin biosynthesis. In terms of biological role, catalyzes the decarboxylative condensation of pimeloyl-[acyl-carrier protein] and L-alanine to produce 8-amino-7-oxononanoate (AON), [acyl-carrier protein], and carbon dioxide. The chain is 8-amino-7-oxononanoate synthase from Stutzerimonas stutzeri (strain A1501) (Pseudomonas stutzeri).